The primary structure comprises 640 residues: UvrABC system protein C (640 aa).

A GIY-YIG domain is found at 22 to 101 (NDPGCYLMKD…IKSHQPYFNV (80 aa)). The 36-residue stretch at 211–246 (DELRILLEKQMISFSESLKFEEAGSVRDQLKGIDRL) folds into the UVR domain.

The protein belongs to the UvrC family. In terms of assembly, interacts with UvrB in an incision complex.

Its subcellular location is the cytoplasm. Its function is as follows. The UvrABC repair system catalyzes the recognition and processing of DNA lesions. UvrC both incises the 5' and 3' sides of the lesion. The N-terminal half is responsible for the 3' incision and the C-terminal half is responsible for the 5' incision. This is UvrABC system protein C from Prochlorococcus marinus (strain NATL2A).